The primary structure comprises 461 residues: Probable carboxypeptidase MGYG_04702 (461 aa).

Residues 1–20 form the signal peptide; it reads MQKTYLLALVSLLASSLVEA. N-linked (GlcNAc...) asparagine glycosylation is found at N48 and N99. D176 is a binding site for Zn(2+). E208 functions as the Proton acceptor in the catalytic mechanism. Zn(2+) is bound at residue E209. N-linked (GlcNAc...) asparagine glycosylation occurs at N396.

It belongs to the peptidase M20A family. Zn(2+) is required as a cofactor.

It is found in the secreted. The sequence is that of Probable carboxypeptidase MGYG_04702 from Arthroderma gypseum (strain ATCC MYA-4604 / CBS 118893) (Microsporum gypseum).